The primary structure comprises 204 residues: LexA repressor (204 aa).

Residues 28–48 constitute a DNA-binding region (H-T-H motif); the sequence is RAEIAQELGFKSPNAAEEHLK. Active-site for autocatalytic cleavage activity residues include S125 and K162.

The protein belongs to the peptidase S24 family. In terms of assembly, homodimer.

It catalyses the reaction Hydrolysis of Ala-|-Gly bond in repressor LexA.. Functionally, represses a number of genes involved in the response to DNA damage (SOS response), including recA and lexA. In the presence of single-stranded DNA, RecA interacts with LexA causing an autocatalytic cleavage which disrupts the DNA-binding part of LexA, leading to derepression of the SOS regulon and eventually DNA repair. The sequence is that of LexA repressor from Pseudomonas aeruginosa (strain LESB58).